The chain runs to 350 residues: DNA-directed RNA polymerase subunit alpha (350 aa).

An alpha N-terminal domain (alpha-NTD) region spans residues 1-226; that stretch reads MLISQRPTLS…ELFGLARELN (226 aa). Positions 241-350 are alpha C-terminal domain (alpha-CTD); that stretch reads ADQAAHFALP…NQDYAETEQL (110 aa). The segment at 328-350 is disordered; it reads GTWNSDAGYDLEDNQDYAETEQL. Acidic residues predominate over residues 336–350; sequence YDLEDNQDYAETEQL.

Belongs to the RNA polymerase alpha chain family. As to quaternary structure, homodimer. The RNAP catalytic core consists of 2 alpha, 1 beta, 1 beta' and 1 omega subunit. When a sigma factor is associated with the core the holoenzyme is formed, which can initiate transcription.

The enzyme catalyses RNA(n) + a ribonucleoside 5'-triphosphate = RNA(n+1) + diphosphate. Its function is as follows. DNA-dependent RNA polymerase catalyzes the transcription of DNA into RNA using the four ribonucleoside triphosphates as substrates. This Mycolicibacterium vanbaalenii (strain DSM 7251 / JCM 13017 / BCRC 16820 / KCTC 9966 / NRRL B-24157 / PYR-1) (Mycobacterium vanbaalenii) protein is DNA-directed RNA polymerase subunit alpha.